The following is a 432-amino-acid chain: Putative D-alanyl-D-alanine carboxypeptidase (432 aa).

Residues alanine 7–leucine 25 form a helical; Signal-anchor membrane-spanning segment.

It belongs to the peptidase S12 family. YfeW subfamily.

It is found in the cell inner membrane. The enzyme catalyses Preferential cleavage: (Ac)2-L-Lys-D-Ala-|-D-Ala. Also transpeptidation of peptidyl-alanyl moieties that are N-acyl substituents of D-alanine.. This Salmonella heidelberg (strain SL476) protein is Putative D-alanyl-D-alanine carboxypeptidase.